The sequence spans 437 residues: MDLSSSPNHPITVVSTFASPFEGPPSVGDSNSSARKPISLWPGMYHSPVTNALWEARCKIFERLLDPPKDAPPQSELLTKTPSQSRTTILYNFSTDYILREQYRDPWNEVRIGKLLEDLDALAGTISVKHCSDDDSTTRPLLLVTASVDKIVLKKPISVDIDLKIVGAVIWVGRSSIEIQLEVSQSTKEGSNAADDVALSANFIFVARDSKTAKAAPVNRLSPETEQEKLLFDEAEARSSMRKRKRGDQERREFENGEANRLQTLLAEGRIFCDMPALADRDSILLRDTRQENSLICQPQQRNIHGRIFGGFLLHRAFELAFSTAYAFAGLVPYFLEIDHVDFXRPVDVGDFLRLKSCVLYTELHNPDQPLINIEVVAHVTRPELRSSEVSNTFYFTFTVRPEAKATKNGYRIRNVVPATEEEARRILERMDAEACI.

The transit peptide at 1–13 (MDLSSSPNHPITV) directs the protein to the chloroplast. HotDog ACOT-type domains follow at residues 89-211 (ILYN…RDSK) and 287-404 (RDTR…RPEA).

It belongs to the acyl coenzyme A hydrolase family. Mostly expressed at low levels in glandular trichomes (lupulin glands), and, to a lower extent, in stems, leaves, flowers and cones.

It localises to the plastid. The protein localises to the chloroplast. Acyl-CoA thioesterases are a group of enzymes that catalyze the hydrolysis of acyl-CoAs to the free fatty acid and coenzyme A (CoASH), providing the potential to regulate intracellular levels of acyl-CoAs, free fatty acids and CoASH. The protein is Acyl-coenzyme A thioesterase 2, chloroplastic of Humulus lupulus (European hop).